Here is a 424-residue protein sequence, read N- to C-terminus: MTTPVPVPNGGPAPAAVPAAAEPGSVGIVTPQLIRFDTPLPLASGQSLQSYELAVETYGTLNAGRTNAVLVCHALNASHHVAGLAADDPNDVGWWDNMVGPGKPLDTNRFFVIGVNNLGSCFGSTGPASINPATGHPWGAAFPVLTVEDWVHAQARLADHFGIERFAAVMGGSLGGMQALSWAITCPERVAHCIVIASTPRLSAQNIGFNEVARRAIITDPDFHGGDYYAHNTVPRRGLSVARMIGHITYLSDDDMAEKFGRTQREPAEGGAYRYGYDVEFEVESYLRYQGEKFSRYFDANTYLLITRALDYFDPARGTGGDLARALKPAQADFLLVSFSTDWRFPPERSREIVRALLKNGSPVTYAEIDAPHGHDAFLLDDARYHAVVRGYYERIARELGLDEPAAGAAPAAAEPACAEGCAA.

The AB hydrolase-1 domain occupies 67–381 (NAVLVCHALN…PHGHDAFLLD (315 aa)). Catalysis depends on S173, which acts as the Nucleophile. Substrate is bound at residue R243. Catalysis depends on residues D342 and H375. A substrate-binding site is contributed by D376.

The protein belongs to the AB hydrolase superfamily. MetX family. Homodimer.

The protein localises to the cytoplasm. The enzyme catalyses L-homoserine + succinyl-CoA = O-succinyl-L-homoserine + CoA. Its pathway is amino-acid biosynthesis; L-methionine biosynthesis via de novo pathway; O-succinyl-L-homoserine from L-homoserine: step 1/1. Transfers a succinyl group from succinyl-CoA to L-homoserine, forming succinyl-L-homoserine. In vitro, also has serine succinyl transferase activity. The polypeptide is Homoserine O-succinyltransferase (Bordetella petrii (strain ATCC BAA-461 / DSM 12804 / CCUG 43448)).